The sequence spans 436 residues: AP-2 complex subunit mu-B (436 aa).

The MHD domain maps to 170 to 435; that stretch reads RNELFLDVLE…IGRSGIYETR (266 aa). A 1,2-diacyl-sn-glycero-3-phospho-(1D-myo-inositol-3,4,5-trisphosphate) contacts are provided by K342, K346, and K355.

It belongs to the adaptor complexes medium subunit family. In terms of assembly, adaptor protein complex 2 (AP-2) is a heterotetramer composed of two large adaptins (alpha-type subunit and beta-type subunit), a medium adaptin (mu-type subunit) and a small adaptin (sigma-type subunit).

The protein localises to the cell membrane. The protein resides in the membrane. Its subcellular location is the coated pit. Component of the adaptor complexes which link clathrin to receptors in coated vesicles. Clathrin-associated protein complexes are believed to interact with the cytoplasmic tails of membrane proteins, leading to their selection and concentration. AP50 is a subunit of the plasma membrane adaptor. The complex binds polyphosphoinositide-containing lipids. The polypeptide is AP-2 complex subunit mu-B (ap2m1b) (Danio rerio (Zebrafish)).